The following is a 178-amino-acid chain: Probable inosine/xanthosine triphosphatase (178 aa).

The protein belongs to the YjjX NTPase family. Homodimer. Mg(2+) is required as a cofactor. Requires Mn(2+) as cofactor.

It carries out the reaction XTP + H2O = XDP + phosphate + H(+). It catalyses the reaction ITP + H2O = IDP + phosphate + H(+). Functionally, phosphatase that hydrolyzes non-canonical purine nucleotides such as XTP and ITP to their respective diphosphate derivatives. Probably excludes non-canonical purines from DNA/RNA precursor pool, thus preventing their incorporation into DNA/RNA and avoiding chromosomal lesions. The polypeptide is Probable inosine/xanthosine triphosphatase (Pyrobaculum calidifontis (strain DSM 21063 / JCM 11548 / VA1)).